Here is a 31-residue protein sequence, read N- to C-terminus: Cytochrome b6-f complex subunit 6 (31 aa).

The helical transmembrane segment at 4 to 26 (ITSYFGFLLAASTITPALLIGLS) threads the bilayer.

This sequence belongs to the PetL family. The 4 large subunits of the cytochrome b6-f complex are cytochrome b6, subunit IV (17 kDa polypeptide, PetD), cytochrome f and the Rieske protein, while the 4 small subunits are PetG, PetL, PetM and PetN. The complex functions as a dimer.

Its subcellular location is the plastid. It is found in the chloroplast thylakoid membrane. Functionally, component of the cytochrome b6-f complex, which mediates electron transfer between photosystem II (PSII) and photosystem I (PSI), cyclic electron flow around PSI, and state transitions. PetL is important for photoautotrophic growth as well as for electron transfer efficiency and stability of the cytochrome b6-f complex. The polypeptide is Cytochrome b6-f complex subunit 6 (Illicium oligandrum (Star anise)).